Consider the following 151-residue polypeptide: RNA polymerase-binding transcription factor DksA (151 aa).

The Zn(2+) site is built by Cys114, Cys117, Cys135, and Cys138. The dksA C4-type zinc finger occupies 114-138 (CNSCSVEIGIRRLEARPTADLCIDC).

This sequence belongs to the DksA family. In terms of assembly, interacts directly with the RNA polymerase.

It localises to the cytoplasm. Transcription factor that acts by binding directly to the RNA polymerase (RNAP). Required for negative regulation of rRNA expression and positive regulation of several amino acid biosynthesis promoters. Also required for regulation of fis expression. The protein is RNA polymerase-binding transcription factor DksA of Buchnera aphidicola subsp. Acyrthosiphon pisum (strain APS) (Acyrthosiphon pisum symbiotic bacterium).